Reading from the N-terminus, the 296-residue chain is Cytochrome bc1 complex cytochrome c subunit (296 aa).

The segment covering 1 to 19 (MMETNPQTSEGAGKAQSSA) has biased composition (polar residues). The segment at 1 to 27 (MMETNPQTSEGAGKAQSSAKKVKNRRK) is disordered. Residues 32–52 (VAGAMALTIGLSGAGILATAI) form a helical membrane-spanning segment. Cytochrome c domains are found at residues 67-147 (ALIA…AANG) and 177-255 (LDVS…KSTK). Cys-80, Cys-83, His-84, Cys-190, Cys-193, and His-194 together coordinate heme c. Residues 274–294 (GLFMWGIGIMVLIAAAMWIGS) form a helical membrane-spanning segment.

As to quaternary structure, the cytochrome bc1 complex is composed of a cytochrome b (QcrB), the Rieske iron-sulfur protein (QcrA) and a diheme cytochrome c (QcrC) subunit. The bc1 complex forms a supercomplex with cytochrome c oxidase (cytochrome aa3). In terms of processing, binds 2 heme c groups covalently per subunit.

The protein localises to the cell membrane. The catalysed reaction is a quinol + 2 Fe(III)-[cytochrome c](out) = a quinone + 2 Fe(II)-[cytochrome c](out) + 2 H(+)(out). Cytochrome c1 subunit of the cytochrome bc1 complex, an essential component of the respiratory electron transport chain required for ATP synthesis. The bc1 complex catalyzes the oxidation of menaquinol and the reduction of cytochrome c in the respiratory chain. The bc1 complex operates through a Q-cycle mechanism that couples electron transfer to generation of the proton gradient that drives ATP synthesis. The protein is Cytochrome bc1 complex cytochrome c subunit (qcrC) of Corynebacterium efficiens (strain DSM 44549 / YS-314 / AJ 12310 / JCM 11189 / NBRC 100395).